Reading from the N-terminus, the 749-residue chain is Polyribonucleotide nucleotidyltransferase (749 aa).

Residues Asp-487 and Asp-493 each coordinate Mg(2+). The KH domain maps to 554-613 (PSTTTIKIDKDKIRDIIGPGGKIIKEICETSGAKIDISDDGTVSVYASDRDKLKVALDKI). An S1 motif domain is found at 623-691 (GEIFNGTVVK…NKGKAKLTIK (69 aa)). The segment at 691-749 (KNADKDKSSNNTKPKTNVNNTNKDNSEPEQRRDSSKKRAWNEDNNAETAEVITERKYFN) is disordered. Low complexity predominate over residues 699–713 (SNNTKPKTNVNNTNK). The segment covering 714–723 (DNSEPEQRRD) has biased composition (basic and acidic residues).

Belongs to the polyribonucleotide nucleotidyltransferase family. Requires Mg(2+) as cofactor.

It is found in the cytoplasm. It carries out the reaction RNA(n+1) + phosphate = RNA(n) + a ribonucleoside 5'-diphosphate. Involved in mRNA degradation. Catalyzes the phosphorolysis of single-stranded polyribonucleotides processively in the 3'- to 5'-direction. The polypeptide is Polyribonucleotide nucleotidyltransferase (Rickettsia conorii (strain ATCC VR-613 / Malish 7)).